We begin with the raw amino-acid sequence, 156 residues long: Dihydrofolate reductase (156 aa).

One can recognise a DHFR domain in the interval 1 to 156 (MLKLIWCQTL…VNYYSNKKEK (156 aa)).

The protein belongs to the dihydrofolate reductase family.

The catalysed reaction is (6S)-5,6,7,8-tetrahydrofolate + NADP(+) = 7,8-dihydrofolate + NADPH + H(+). The protein operates within cofactor biosynthesis; tetrahydrofolate biosynthesis; 5,6,7,8-tetrahydrofolate from 7,8-dihydrofolate: step 1/1. Functionally, key enzyme in folate metabolism. Catalyzes an essential reaction for de novo glycine and purine synthesis, and for DNA precursor synthesis. This chain is Dihydrofolate reductase (folA), found in Ureaplasma parvum serovar 3 (strain ATCC 700970).